The following is a 152-amino-acid chain: Transcriptional regulator MraZ (152 aa).

2 SpoVT-AbrB domains span residues Ala5–Glu52 and Ala81–Arg124.

This sequence belongs to the MraZ family. Forms oligomers.

It is found in the cytoplasm. Its subcellular location is the nucleoid. In Tolumonas auensis (strain DSM 9187 / NBRC 110442 / TA 4), this protein is Transcriptional regulator MraZ.